The following is a 253-amino-acid chain: Geranylgeranylglyceryl phosphate synthase (253 aa).

Mg(2+)-binding residues include aspartate 23 and serine 52. Sn-glycerol 1-phosphate contacts are provided by residues 171 to 177 (YFEAGSG), 202 to 203 (GG), and 224 to 225 (GT).

This sequence belongs to the GGGP/HepGP synthase family. Group II subfamily. Homodimer. It depends on Mg(2+) as a cofactor.

It localises to the cytoplasm. It catalyses the reaction sn-glycerol 1-phosphate + (2E,6E,10E)-geranylgeranyl diphosphate = sn-3-O-(geranylgeranyl)glycerol 1-phosphate + diphosphate. It participates in membrane lipid metabolism; glycerophospholipid metabolism. Inhibited by high concentrations of magnesium (&gt;10 mM) and by EDTA in vitro. In terms of biological role, prenyltransferase that catalyzes the transfer of the geranylgeranyl moiety of geranylgeranyl diphosphate (GGPP) to the C3 hydroxyl of sn-glycerol-1-phosphate (G1P). This reaction is the first ether-bond-formation step in the biosynthesis of archaeal membrane lipids. Cannot use sn-glycerol-3-phosphate (G3P) as substrate. This Thermoplasma acidophilum (strain ATCC 25905 / DSM 1728 / JCM 9062 / NBRC 15155 / AMRC-C165) protein is Geranylgeranylglyceryl phosphate synthase.